We begin with the raw amino-acid sequence, 415 residues long: Acetate kinase (415 aa).

A Mg(2+)-binding site is contributed by Asn-8. Position 15 (Lys-15) interacts with ATP. Arg-106 contacts substrate. Residue Asp-163 is the Proton donor/acceptor of the active site. ATP contacts are provided by residues 222–226, 296–298, and 344–348; these read HLGNG, DLR, and GIGEN. Glu-397 contacts Mg(2+).

The protein belongs to the acetokinase family. As to quaternary structure, homodimer. The cofactor is Mg(2+). It depends on Mn(2+) as a cofactor.

It localises to the cytoplasm. It catalyses the reaction acetate + ATP = acetyl phosphate + ADP. It functions in the pathway metabolic intermediate biosynthesis; acetyl-CoA biosynthesis; acetyl-CoA from acetate: step 1/2. Its function is as follows. Catalyzes the formation of acetyl phosphate from acetate and ATP. Can also catalyze the reverse reaction. This chain is Acetate kinase, found in Thermosynechococcus vestitus (strain NIES-2133 / IAM M-273 / BP-1).